A 361-amino-acid chain; its full sequence is Histidinol-phosphate aminotransferase (361 aa).

K219 is modified (N6-(pyridoxal phosphate)lysine).

The protein belongs to the class-II pyridoxal-phosphate-dependent aminotransferase family. Histidinol-phosphate aminotransferase subfamily. As to quaternary structure, homodimer. Requires pyridoxal 5'-phosphate as cofactor.

It catalyses the reaction L-histidinol phosphate + 2-oxoglutarate = 3-(imidazol-4-yl)-2-oxopropyl phosphate + L-glutamate. It participates in amino-acid biosynthesis; L-histidine biosynthesis; L-histidine from 5-phospho-alpha-D-ribose 1-diphosphate: step 7/9. The chain is Histidinol-phosphate aminotransferase from Acinetobacter baumannii (strain ACICU).